The following is a 487-amino-acid chain: Gasdermin-D (487 aa).

Tyr38 bears the Phosphotyrosine mark. Cys39, Cys57, and Cys77 each carry S-(2-succinyl)cysteine. The next 2 membrane-spanning stretches (beta stranded) occupy residues 92-98 (QGRVMLS) and 104-109 (KISGGA). Cys122 bears the S-(2-succinyl)cysteine mark. The next 2 beta stranded transmembrane spans lie at 181 to 187 (GSGQFTL) and 192 to 198 (CLKGEGK). An S-(2-succinyl)cysteine mark is found at Cys192 and Cys265. Cys192 carries the S-palmitoyl cysteine lipid modification. Residues 278-298 (IDEEELIEAADFQGLYAEVKA) are linker helix loop. S-(2-succinyl)cysteine is present on residues Cys299, Cys434, and Cys487.

It belongs to the gasdermin family. As to quaternary structure, homooligomer; homooligomeric ring-shaped pore complex containing 27-28 subunits when inserted in the membrane. Homooligomerization is promoted by the mTORC1 complex in macrophages. In response to a canonical inflammasome stimulus, such as nigericin, recruited to NLRP3 inflammasone with similar kinetics to that of uncleaved CASP1 precursor. Although this recruitment is also observed in the absence of PYCARD, it is more efficient in its presence. In terms of processing, cleavage at Asp-276 by CASP1 (mature and uncleaved precursor forms), CASP4/CASP11 or CASP8 relieves autoinhibition and is sufficient to initiate pyroptosis. Cleavage by CASP1 and CASP4/CASP11 is not strictly dependent on the consensus cleavage site on GSDMD but depends on an exosite interface on CASP1 that recognizes and binds the Gasdermin-D, C-terminal (GSDMD-CT) part. Cleavage by CASP8 takes place following inactivation of MAP3K7/TAK1 by Yersinia toxin YopJ. Cleavage at Asp-88 by CASP3 or CASP7 inactivates the ability to mediate pyroptosis, but generates the Gasdermin-D, p13 chain, which translocates to the nucleus and acts as a transcription regulator. Cleavage by papain allergen generates the Gasdermin-D, p40 chain. Palmitoylated at Cys-192 by ZDHHC5 and ZDHHC9 in response to microbial infection and danger signals. May also be palmitoylated by ZDHHC7. Palmitoylation takes place before cleavage by caspases (CASP1, CASP4, CASP5 or CASP8) and is required for membrane translocation and pore formation. Depalmitoylated by LYPLA2. Post-translationally, succination of Cys-192 by the Krebs cycle intermediate fumarate, which leads to S-(2-succinyl)cysteine residues, inhibits processing by caspases, and ability to initiate pyroptosis. Succination modification is catalyzed by a non-enzymatic reaction caused by an accumulation of fumarate. In terms of processing, glycosylated: O-GlcNAcylation by OGT leads to reduced cleavage by CASP4 and decreased LPS-induced endothelial cell pyroptosis. Highly expressed in brain endothelial cells.

It localises to the cytoplasm. The protein localises to the cytosol. It is found in the inflammasome. The protein resides in the cell membrane. Its subcellular location is the secreted. It localises to the mitochondrion membrane. The protein localises to the nucleus. The full-length protein before cleavage is inactive: intramolecular interactions between N- and C-terminal domains mediate autoinhibition in the absence of activation signal. The intrinsic pyroptosis-inducing activity is carried by the released N-terminal moiety (Gasdermin-D, N-terminal) following cleavage by inflammatory caspases CASP1, CASP4/CASP11 or CASP8. Cleavage at Asp-88 by CASP3 or CASP7 inactivates the ability to mediate pyroptosis. Pore formation is specifically inhibited by VHH(GSDMD-1) nanobody, protecting against excessive pyroptosis. Inhibited by small molecule NU6300, which covalently reacts with Cys-191, thereby preventing palmitoylation and pyroptosis. Its function is as follows. Precursor of a pore-forming protein that plays a key role in host defense against pathogen infection and danger signals. This form constitutes the precursor of the pore-forming protein: upon cleavage, the released N-terminal moiety (Gasdermin-D, N-terminal) binds to membranes and forms pores, triggering pyroptosis. Promotes pyroptosis in response to microbial infection and danger signals. Produced by the cleavage of gasdermin-D by inflammatory caspases CASP1 or CASP4/CASP11 in response to canonical, as well as non-canonical (such as cytosolic LPS) inflammasome activators. After cleavage, moves to the plasma membrane where it strongly binds to inner leaflet lipids, including monophosphorylated phosphatidylinositols, such as phosphatidylinositol 4-phosphate, bisphosphorylated phosphatidylinositols, such as phosphatidylinositol (4,5)-bisphosphate, as well as phosphatidylinositol (3,4,5)-bisphosphate, and more weakly to phosphatidic acid and phosphatidylserine. Homooligomerizes within the membrane and forms pores of 10-15 nanometers (nm) of inner diameter, allowing the release of mature interleukin-1 (IL1B and IL18) and triggering pyroptosis. Gasdermin pores also allow the release of mature caspase-7 (CASP7). In some, but not all, cells types, pyroptosis is followed by pyroptotic cell death, which is caused by downstream activation of ninjurin-1 (NINJ1), which mediates membrane rupture (cytolysis). Also forms pores in the mitochondrial membrane, resulting in release of mitochondrial DNA (mtDNA) into the cytosol. Gasdermin-D, N-terminal released from pyroptotic cells into the extracellular milieu rapidly binds to and kills both Gram-negative and Gram-positive bacteria, without harming neighboring mammalian cells, as it does not disrupt the plasma membrane from the outside due to lipid-binding specificity. Under cell culture conditions, also active against intracellular bacteria, such as Listeria monocytogenes. Also active in response to MAP3K7/TAK1 inactivation by Yersinia toxin YopJ, which triggers cleavage by CASP8 and subsequent activation. Required for mucosal tissue defense against enteric pathogens. Activation of the non-canonical inflammasome in brain endothelial cells can lead to excessive pyroptosis, leading to blood-brain barrier breakdown. Strongly binds to bacterial and mitochondrial lipids, including cardiolipin. Does not bind to unphosphorylated phosphatidylinositol, phosphatidylethanolamine nor phosphatidylcholine. Functionally, transcription coactivator produced by the cleavage by CASP3 or CASP7 in the upper small intestine in response to dietary antigens. Required to maintain food tolerance in small intestine: translocates to the nucleus and acts as a coactivator for STAT1 to induce the transcription of CIITA and MHC class II molecules, which in turn induce type 1 regulatory T (Tr1) cells in upper small intestine. In terms of biological role, produced by the cleavage by papain allergen. After cleavage, moves to the plasma membrane and homooligomerizes within the membrane and forms pores of 10-15 nanometers (nm) of inner diameter, allowing the specific release of mature interleukin-33 (IL33), promoting type 2 inflammatory immune response. The sequence is that of Gasdermin-D from Mus musculus (Mouse).